We begin with the raw amino-acid sequence, 501 residues long: Glycerol kinase (501 aa).

Threonine 16 serves as a coordination point for ADP. 3 residues coordinate ATP: threonine 16, threonine 17, and serine 18. Sn-glycerol 3-phosphate is bound at residue threonine 16. Residue arginine 20 participates in ADP binding. Sn-glycerol 3-phosphate contacts are provided by arginine 84, glutamate 85, tyrosine 135, and aspartate 242. Residues arginine 84, glutamate 85, tyrosine 135, aspartate 242, and glutamine 243 each coordinate glycerol. ADP is bound by residues threonine 264 and glycine 307. 4 residues coordinate ATP: threonine 264, glycine 307, glutamine 311, and glycine 408. An ADP-binding site is contributed by glycine 408.

The protein belongs to the FGGY kinase family.

The catalysed reaction is glycerol + ATP = sn-glycerol 3-phosphate + ADP + H(+). It participates in polyol metabolism; glycerol degradation via glycerol kinase pathway; sn-glycerol 3-phosphate from glycerol: step 1/1. Its function is as follows. Key enzyme in the regulation of glycerol uptake and metabolism. Catalyzes the phosphorylation of glycerol to yield sn-glycerol 3-phosphate. The chain is Glycerol kinase from Saccharolobus islandicus (strain M.14.25 / Kamchatka #1) (Sulfolobus islandicus).